The following is a 91-amino-acid chain: Alpha-defensin-related sequence 10 (91 aa).

The N-terminal stretch at 1 to 19 (MKKLVLLSAFVLLAFQVQA) is a signal peptide. Positions 20 to 65 (DSIQNTDEETKTEEQPGEENQAMSVSFGDPEGSALQDAAVGMARPC) are excised as a propeptide. The disordered stretch occupies residues 21 to 52 (SIQNTDEETKTEEQPGEENQAMSVSFGDPEGS). Tandem repeats lie at residues 65–67 (CPP), 68–70 (CPS), 71–73 (CPS), 74–76 (CPW), 77–79 (CPM), 80–82 (CPR), and 83–85 (CPS). Residues 65-85 (CPPCPSCPSCPWCPMCPRCPS) form a 7 X 3 AA tandem repeats of C-P-X region.

Belongs to the alpha-defensin family. In terms of tissue distribution, paneth cells of the small bowel.

It is found in the secreted. Its function is as follows. Apparent precursor of a secreted, cationic, proline- and cysteine-rich peptide that contains Cys-Pro-Xaa repeats. Unlike cryptdin, the proposed mature peptide region lacks the structural motif characteristic of defensins. It may have microbicidal activities. The chain is Alpha-defensin-related sequence 10 (Defa-rs10) from Mus musculus (Mouse).